The sequence spans 834 residues: Translation factor GUF1 homolog, mitochondrial (834 aa).

Residues Met-1–Tyr-66 constitute a mitochondrion transit peptide. The tr-type G domain maps to Ala-129–Arg-314. Residues Ala-138–Thr-145, Asp-205–His-209, and Thr-259–Asp-262 each bind GTP. Residues Ala-475 to Val-507 form a disordered region. Positions Ala-488–Val-507 are enriched in low complexity.

It belongs to the TRAFAC class translation factor GTPase superfamily. Classic translation factor GTPase family. LepA subfamily.

It is found in the mitochondrion inner membrane. The catalysed reaction is GTP + H2O = GDP + phosphate + H(+). Promotes mitochondrial protein synthesis. May act as a fidelity factor of the translation reaction, by catalyzing a one-codon backward translocation of tRNAs on improperly translocated ribosomes. Binds to mitochondrial ribosomes in a GTP-dependent manner. The polypeptide is Translation factor GUF1 homolog, mitochondrial (Leishmania major).